The following is a 490-amino-acid chain: MSRMAEQQLYIHGGYTSATSGRTFETINPANGNVLATVQAAGREDVDRAVKSAQQGQKIWASMTAMERSRILRRAVDILRERNDELAKLETLDTGKAYSETSTVDIVTGADVLEYYAGLIPALEGSQIPLRETSFVYTRREPLGVVAGIGAWNYPIQIALWKSAPALAAGNAMIFKPSEVTPLTALKLAEIYSEAGLPDGVFNVLPGVGAETGQYLTEHPGIAKVSFTGGVASGKKVMANSAASSLKEVTMELGGKSPLIVFDDADLDLAADIAMMANFFSSGQVCTNGTRVFVPAKCKAAFEQKILARVERIRAGDVFDPQTNFGPLVSFPHRDNVLRYIAKGKEEGARVLCGGDVLKGDGFDNGAWVAPTVFTDCSDDMTIVREEIFGPVMSILTYESEDEVIRRANDTDYGLAAGIVTADLNRAHRVIHQLEAGICWINTWGESPAEMPVGGYKHSGIGRENGVMTLQSYTQVKSIQVEMAKFQSIF.

K(+) is bound by residues T26, I27, and D93. 150 to 152 contacts NAD(+); it reads GAW. The active-site Charge relay system is the K162. 176-179 provides a ligand contact to NAD(+); the sequence is KPSE. Residue V180 participates in K(+) binding. An NAD(+)-binding site is contributed by 230–233; it reads GVAS. Residue L246 coordinates K(+). The Proton acceptor role is filled by E252. NAD(+)-binding residues include G254, C286, and E387. The active-site Nucleophile is the C286. Position 286 is a cysteine sulfenic acid (-SOH) (C286). K457 and G460 together coordinate K(+). Residue E464 is the Charge relay system of the active site.

Belongs to the aldehyde dehydrogenase family. In terms of assembly, dimer of dimers. It depends on K(+) as a cofactor.

It carries out the reaction betaine aldehyde + NAD(+) + H2O = glycine betaine + NADH + 2 H(+). Its pathway is amine and polyamine biosynthesis; betaine biosynthesis via choline pathway; betaine from betaine aldehyde: step 1/1. Functionally, involved in the biosynthesis of the osmoprotectant glycine betaine. Catalyzes the irreversible oxidation of betaine aldehyde to the corresponding acid. This is Betaine aldehyde dehydrogenase from Escherichia coli (strain K12 / DH10B).